The primary structure comprises 155 residues: Ribonuclease H (155 aa).

One can recognise an RNase H type-1 domain in the interval 1-142; the sequence is MLKQVEIFTD…CDELARAAAS (142 aa). Residues D10, E48, D70, and D134 each coordinate Mg(2+).

Belongs to the RNase H family. As to quaternary structure, monomer. It depends on Mg(2+) as a cofactor.

Its subcellular location is the cytoplasm. The catalysed reaction is Endonucleolytic cleavage to 5'-phosphomonoester.. In terms of biological role, endonuclease that specifically degrades the RNA of RNA-DNA hybrids. In Klebsiella pneumoniae subsp. pneumoniae (strain ATCC 700721 / MGH 78578), this protein is Ribonuclease H.